Consider the following 278-residue polypeptide: uncharacterized protein (278 aa).

This is an uncharacterized protein from Escherichia coli (strain K12).